The chain runs to 618 residues: 1-deoxy-D-xylulose-5-phosphate synthase (618 aa).

Residues His-70 and 111-113 (GHS) contribute to the thiamine diphosphate site. Asp-142 contributes to the Mg(2+) binding site. Residues 143-144 (GS), Asn-171, Tyr-278, and Glu-360 contribute to the thiamine diphosphate site. Position 171 (Asn-171) interacts with Mg(2+).

Belongs to the transketolase family. DXPS subfamily. As to quaternary structure, homodimer. The cofactor is Mg(2+). It depends on thiamine diphosphate as a cofactor.

The catalysed reaction is D-glyceraldehyde 3-phosphate + pyruvate + H(+) = 1-deoxy-D-xylulose 5-phosphate + CO2. The protein operates within metabolic intermediate biosynthesis; 1-deoxy-D-xylulose 5-phosphate biosynthesis; 1-deoxy-D-xylulose 5-phosphate from D-glyceraldehyde 3-phosphate and pyruvate: step 1/1. Its function is as follows. Catalyzes the acyloin condensation reaction between C atoms 2 and 3 of pyruvate and glyceraldehyde 3-phosphate to yield 1-deoxy-D-xylulose-5-phosphate (DXP). The protein is 1-deoxy-D-xylulose-5-phosphate synthase of Helicobacter pylori (strain G27).